The sequence spans 857 residues: Bifunctional levopimaradiene synthase, chloroplastic (857 aa).

The transit peptide at 1 to 33 (MALPSSSLSSQIHTGATTQCIPHFHGSLNAGTS) directs the protein to the chloroplast. Lys257 is a substrate binding site. 2 residues coordinate Mg(2+): Asp390 and Asp392. The DXDD motif signature appears at 390-393 (DIDD). Position 477 (Lys477) interacts with substrate. 5 residues coordinate Mg(2+): Asp609, Asp613, Asn753, Thr757, and Glu761. Residues 609–613 (DDLYD) carry the DDXXD motif motif.

The protein belongs to the terpene synthase family. Tpsd subfamily. Mg(2+) serves as cofactor.

Its subcellular location is the plastid. The protein localises to the chloroplast. It catalyses the reaction (2E,6E,10E)-geranylgeranyl diphosphate = (+)-copalyl diphosphate. It carries out the reaction (+)-copalyl diphosphate = abieta-7,13-diene + diphosphate. The catalysed reaction is (+)-copalyl diphosphate = abieta-8(14),12-diene + diphosphate. The enzyme catalyses (+)-copalyl diphosphate = neoabietadiene + diphosphate. It functions in the pathway terpene metabolism; oleoresin biosynthesis. Its function is as follows. Involved in defensive oleoresin formation in conifers in response to insect attack or other injury. Involved in diterpene (C20) olefins biosynthesis. Bifunctional enzyme that catalyzes two sequential cyclizations of geranylgeranyl diphosphate (GGPP) to levopimaradiene. Levopimaradiene is the major products of the enzyme with abietadiene and neoabietadiene. No activity with farnesyl diphosphate (FPP) as substrate. The chain is Bifunctional levopimaradiene synthase, chloroplastic from Pinus contorta (Shore pine).